The chain runs to 503 residues: D-xylose-proton symporter-like 2 (503 aa).

A compositionally biased stretch (polar residues) spans 1-15 (MALDPEQQQPISSVS). A disordered region spans residues 1–32 (MALDPEQQQPISSVSREFGKSSGEISPEREPL). A2 carries the post-translational modification N-acetylalanine. At S26 the chain carries Phosphoserine. A run of 12 helical transmembrane segments spans residues 42-62 (YSVV…LLYG), 99-119 (GSLY…DVIG), 124-144 (LILA…APTY), 146-166 (VLII…HAAP), 187-207 (FFIV…VNVH), 213-233 (MYAT…WLPA), 305-325 (ALII…PSVL), 346-366 (VSIL…VVID), 375-395 (LGGV…YLFF), 400-420 (VVAV…FGPI), 437-457 (GLSL…FAFS), and 467-487 (ILFC…FFIV).

It belongs to the major facilitator superfamily. Sugar transporter (TC 2.A.1.1) family.

The protein resides in the membrane. The sequence is that of D-xylose-proton symporter-like 2 from Arabidopsis thaliana (Mouse-ear cress).